Here is a 400-residue protein sequence, read N- to C-terminus: Enoyl-[acyl-carrier-protein] reductase [NADH] (400 aa).

NAD(+) contacts are provided by residues 48–53 (GSSSGY), 74–75 (FE), 111–112 (DA), and 139–140 (LA). Y225 is a binding site for substrate. Y235 acts as the Proton donor in catalysis. NAD(+)-binding positions include K244 and 273 to 275 (VVT).

This sequence belongs to the TER reductase family. As to quaternary structure, monomer.

The enzyme catalyses a 2,3-saturated acyl-[ACP] + NAD(+) = a (2E)-enoyl-[ACP] + NADH + H(+). Its pathway is lipid metabolism; fatty acid biosynthesis. Functionally, involved in the final reduction of the elongation cycle of fatty acid synthesis (FAS II). Catalyzes the reduction of a carbon-carbon double bond in an enoyl moiety that is covalently linked to an acyl carrier protein (ACP). The sequence is that of Enoyl-[acyl-carrier-protein] reductase [NADH] from Aliivibrio fischeri (strain ATCC 700601 / ES114) (Vibrio fischeri).